Here is a 1139-residue protein sequence, read N- to C-terminus: Phospholipid-transporting ATPase tat-1 (1139 aa).

The next 3 helical transmembrane spans lie at 78–98, 276–296, and 318–338; these read YTTAVPFLIILSVSALKEIFE, IIFLFFVLVALALISATGSEI, and SFLWGVLTFFILYNNLIPISL. The active-site 4-aspartylphosphate intermediate is the D388. 6 consecutive transmembrane segments (helical) span residues 831–851, 855–875, 901–921, 935–955, 972–992, and 1013–1033; these read ICLYIIELWFAMFSAWSGQTI, WTIGMFNVIFTAWPPVVLGLF, IGNFSLWIGLAIVHSLSLFFL, GLTGGWLMLGNCAYTFVVATV, VACIGSIGLWIVFVIVYSLVF, and YTFWLALLFIPLATLLWDLVI.

This sequence belongs to the cation transport ATPase (P-type) (TC 3.A.3) family. Type IV subfamily.

The protein resides in the cell membrane. It is found in the early endosome membrane. Its subcellular location is the recycling endosome membrane. It catalyses the reaction ATP + H2O + phospholipidSide 1 = ADP + phosphate + phospholipidSide 2.. The catalysed reaction is a 1,2-diacyl-sn-glycero-3-phospho-L-serine(out) + ATP + H2O = a 1,2-diacyl-sn-glycero-3-phospho-L-serine(in) + ADP + phosphate + H(+). In terms of biological role, transports phosphatidylserine from the outer to the inner leaflet of the plasma membrane, thereby maintaining the enrichment of this phospholipid in the inner leaflet. Ectopic exposure of phosphatidylserine on the cell surface may result in removal of living cells by neighboring phagocytes. Regulation of the phosphatidylserine distribution in plasma membranes is likely to help in the maintenance and control of the membrane surface charge. Plays a role in the formation of the tubular membrane structure and in membrane trafficking and is specifically involved in the recycling and degradation of endocytic cargo, likely with its chaperone protein chat-1. The polypeptide is Phospholipid-transporting ATPase tat-1 (tat-1) (Caenorhabditis elegans).